The chain runs to 572 residues: MRTSQYLFSTLKETPNDAQVVSHQLMLRAGMIRPMASGLYNWLPTGIRVLKKVEKIIREEMNKGGAIEVLMPVVQPAELWEESGRWEQYGPELLRFEDRGNRNFVLGPTHEEVITDLIRREVSSYKQLPLNLYQIQTKFRDEVRPRFGVMRSREFIMKDAYSFHTTQESLQETYDVMYQVYSNIFNRLGLDFRAVQADTGSIGGSASHEFQVLASSGEDDVVFSTESDFAANIELAEAVAIGERQAPTAEMTLVDTPNAKTINELVEQFNLPIEKTVKTLIVKGADENQPLVALIIRGDHELNEIKAQKHPLVADPLEFADEAEIKAKIGARVGSLGAVNLNIPAIIDRTVALMSDFSCGANIDGKHYFNVNWERDVAMPEVFDLRNVVEGDRSPDGKGTLQIKRGIEVGHIFQLGKKYSEAMKATVQGEDGKPLVMTMGCYGIGVTRVVASAIEQHHDDRGIIWPSDEIAPFTVAIVPMNMHKSESVQKYAEELYRTLQSQGVDVIFDDRKERPGVMFADMELIGVPHMVVIGEKNLDNGEIEYKNRRSGEKEMISKDKLLSVLNEKLGNL.

This sequence belongs to the class-II aminoacyl-tRNA synthetase family. ProS type 1 subfamily. Homodimer.

It is found in the cytoplasm. It catalyses the reaction tRNA(Pro) + L-proline + ATP = L-prolyl-tRNA(Pro) + AMP + diphosphate. Functionally, catalyzes the attachment of proline to tRNA(Pro) in a two-step reaction: proline is first activated by ATP to form Pro-AMP and then transferred to the acceptor end of tRNA(Pro). As ProRS can inadvertently accommodate and process non-cognate amino acids such as alanine and cysteine, to avoid such errors it has two additional distinct editing activities against alanine. One activity is designated as 'pretransfer' editing and involves the tRNA(Pro)-independent hydrolysis of activated Ala-AMP. The other activity is designated 'posttransfer' editing and involves deacylation of mischarged Ala-tRNA(Pro). The misacylated Cys-tRNA(Pro) is not edited by ProRS. In Haemophilus influenzae (strain PittEE), this protein is Proline--tRNA ligase.